A 130-amino-acid polypeptide reads, in one-letter code: MRMHFVVMVMLLPALMMAGSECRSSCRLTNISITVESEECGSCITIDTTACAGLCKTQESVYRSPLMLSYQNTCNFREWTYETYEFKGCPARADSVFTYPVALSCECSKCNSDITDCGALSQQTLSCNAH.

An N-terminal signal peptide occupies residues 1–18 (MRMHFVVMVMLLPALMMA). Disulfide bonds link Cys26-Cys74, Cys40-Cys89, Cys51-Cys105, Cys55-Cys107, and Cys110-Cys117. N-linked (GlcNAc...) asparagine glycosylation is present at Asn30.

Belongs to the glycoprotein hormones subunit beta family. Heterodimer of an alpha and a beta chain.

The protein resides in the secreted. Involved in gametogenesis and steroidogenesis. The protein is Gonadotropin subunit beta-1 (cgba) of Cyprinus carpio (Common carp).